Reading from the N-terminus, the 154-residue chain is MHCPFCRHSDSRVIDSRETDEGQAIRRRRSCPECGRRFTTVETAVVAVVKRSGVTEPFSRGKVIRGVRRACQGRQVDDDALNLLAQQVEDTVRAAGLPEVPSHEVGLAILGPLRELDEVAYLRFASVYRSFSSADDFEREIEALRAHRRVSTSR.

The segment at 3 to 34 (CPFCRHSDSRVIDSRETDEGQAIRRRRSCPEC) is a zinc-finger region. In terms of domain architecture, ATP-cone spans 46 to 136 (VAVVKRSGVT…VYRSFSSADD (91 aa)).

The protein belongs to the NrdR family. The cofactor is Zn(2+).

Functionally, negatively regulates transcription of bacterial ribonucleotide reductase nrd genes and operons by binding to NrdR-boxes. The polypeptide is Transcriptional repressor NrdR (Mycobacterium leprae (strain Br4923)).